The chain runs to 292 residues: Elongation factor Ts (292 aa).

The tract at residues 82-85 is involved in Mg(2+) ion dislocation from EF-Tu; the sequence is TDFV.

This sequence belongs to the EF-Ts family.

It is found in the cytoplasm. Its function is as follows. Associates with the EF-Tu.GDP complex and induces the exchange of GDP to GTP. It remains bound to the aminoacyl-tRNA.EF-Tu.GTP complex up to the GTP hydrolysis stage on the ribosome. The protein is Elongation factor Ts of Bordetella petrii (strain ATCC BAA-461 / DSM 12804 / CCUG 43448).